The sequence spans 358 residues: Stearoyl-CoA desaturase 2 (358 aa).

Over 1–71 the chain is Cytoplasmic; it reads MPAHILQEIS…EGPPPKLEYV (71 aa). Residues 16-39 are disordered; sequence TTTITAPPSGGQQNGGEKFEKSSH. Residues 72–92 traverse the membrane as a helical segment; sequence WRNIILMALLHLGALYGITLV. N74 contacts substrate. Topologically, residues 93–96 are lumenal; it reads PSCK. The helical transmembrane segment at 97-117 threads the bilayer; sequence LYTCLFAYLYYVISALGITAG. Topologically, residues 118–216 are cytoplasmic; sequence AHRLWSHRTY…EKLVMFQRRY (99 aa). Positions 119 and 124 each coordinate Fe cation. A Histidine box-1 motif is present at residues 119-124; that stretch reads HRLWSH. Substrate contacts are provided by N147, R154, and D155. Residues H156, H159, and H160 each coordinate Fe cation. The Histidine box-2 signature appears at 156-160; it reads HRAHH. Substrate contacts are provided by R187 and K188. The helical transmembrane segment at 217-236 threads the bilayer; sequence YKPGLLLMCFVLPTLVPWYC. Topologically, residues 237–240 are lumenal; the sequence is WGET. The chain crosses the membrane as a helical span at residues 241 to 262; sequence FVNSLCVSTFLRYAVVLNATWL. Position 261 (W261) interacts with substrate. At 263–358 the chain is on the cytoplasmic side; the sequence is VNSAAHLYGY…RTGDGSCKSG (96 aa). The Fe cation site is built by H268, H297, H300, and H301. The short motif at 297-301 is the Histidine box-3 element; that stretch reads HNYHH.

The protein belongs to the fatty acid desaturase type 1 family. The cofactor is Fe(2+). Detected in brain and skin. Highly expressed in brain, and detected at low levels in heart, stomach, lung and testis. Detected both in dermis and epidermis.

It localises to the endoplasmic reticulum membrane. It is found in the microsome membrane. It carries out the reaction octadecanoyl-CoA + 2 Fe(II)-[cytochrome b5] + O2 + 2 H(+) = (9Z)-octadecenoyl-CoA + 2 Fe(III)-[cytochrome b5] + 2 H2O. It catalyses the reaction hexadecanoyl-CoA + 2 Fe(II)-[cytochrome b5] + O2 + 2 H(+) = (9Z)-hexadecenoyl-CoA + 2 Fe(III)-[cytochrome b5] + 2 H2O. In terms of biological role, stearoyl-CoA desaturase that utilizes O(2) and electrons from reduced cytochrome b5 to introduce the first double bond into saturated fatty acyl-CoA substrates. Catalyzes the insertion of a cis double bond at the delta-9 position into fatty acyl-CoA substrates including palmitoyl-CoA and stearoyl-CoA. Gives rise to a mixture of 16:1 and 18:1 unsaturated fatty acids. Contributes to the biosynthesis of membrane phospholipids, cholesterol esters and triglycerides, especially during embryonic development and in neonates. Important for normal permeability barrier function of the skin in neonates. In Mus musculus (Mouse), this protein is Stearoyl-CoA desaturase 2 (Scd2).